A 141-amino-acid chain; its full sequence is Hemoglobin subunit alpha-A (141 aa).

Residues 1–141 enclose the Globin domain; the sequence is VLSANDKTNV…VGNVLSAKYR (141 aa). His-58 contributes to the O2 binding site. A heme b-binding site is contributed by His-87.

This sequence belongs to the globin family. Heterotetramer of two alpha chains and two beta chains. Red blood cells.

In terms of biological role, involved in oxygen transport from the lung to the various peripheral tissues. The sequence is that of Hemoglobin subunit alpha-A (HBAA) from Trigonoceps occipitalis (White-headed vulture).